Consider the following 375-residue polypeptide: MKLTKTALCTALFATFTFSANAQTYPDLPVGIKGGTGALIGDTVYVGLGSGGDKFYTLDLKDPSAQWKEIATFPGGERNQPVAAAVDGKLYVFGGLQKNEKGELQLVNDAYRYNPSDNTWMKLPTRSPRGLVGSSGASHGDKVYILGGSNLSIFNGFFQDNVAAGEDQAKKDEIAAAYFDQRPEDYFFTTELLSYEPSTNKWRNEGRIPFSGRAGAAFTIQGNDLVVVNGEIKPGLRTAETHQGKFTAKGVQWKNLPDLPAPKGKSQDGLAGALSGYSNGHYLVTGGANFPGSIKQYKEGKLHAHKGLSKAWHNEVYTLNNGKWRIVGELPMNIGYGFSVSYNNKVLLIGGETDGGKALTSVKAISYDGKKLTIE.

The N-terminal stretch at 1–22 (MKLTKTALCTALFATFTFSANA) is a signal peptide. Kelch repeat units lie at residues 43 to 87 (TVYV…AAVD), 89 to 140 (KLYV…ASHG), 142 to 176 (KVYI…EIAA), 177 to 222 (AYFD…TIQG), 225 to 273 (LVVV…LAGA), 295 to 344 (KQYK…SYNN), and 346 to 375 (VLLI…LTIE). Glu-231 (proton acceptor) is an active-site residue.

The protein belongs to the NanM family. Homodimer.

The protein resides in the periplasm. The enzyme catalyses N-acetyl-alpha-neuraminate = N-acetyl-beta-neuraminate. Its function is as follows. Converts alpha-N-acetylneuranimic acid (Neu5Ac) to the beta-anomer, accelerating the equilibrium between the alpha- and beta-anomers. Probably facilitates sialidase-negative bacteria to compete successfully for limited amounts of extracellular Neu5Ac, which is likely taken up in the beta-anomer. In addition, the rapid removal of sialic acid from solution might be advantageous to the bacterium to damp down host responses. The sequence is that of N-acetylneuraminate epimerase from Haemophilus influenzae (strain PittEE).